Reading from the N-terminus, the 143-residue chain is uncharacterized protein (143 aa).

The 133-residue stretch at 5 to 137 folds into the HTH marR-type domain; sequence DARLASDLSL…LRNAADLILE (133 aa). A DNA-binding region (H-T-H motif) is located at residues 51–74; sequence PGALAIRERVRPPSMTRVIASLAD.

In terms of assembly, homodimer.

This is an uncharacterized protein from Mycobacterium leprae (strain TN).